A 254-amino-acid polypeptide reads, in one-letter code: Leucyl/phenylalanyl-tRNA--protein transferase (254 aa).

The protein belongs to the L/F-transferase family.

The protein resides in the cytoplasm. The catalysed reaction is N-terminal L-lysyl-[protein] + L-leucyl-tRNA(Leu) = N-terminal L-leucyl-L-lysyl-[protein] + tRNA(Leu) + H(+). It catalyses the reaction N-terminal L-arginyl-[protein] + L-leucyl-tRNA(Leu) = N-terminal L-leucyl-L-arginyl-[protein] + tRNA(Leu) + H(+). The enzyme catalyses L-phenylalanyl-tRNA(Phe) + an N-terminal L-alpha-aminoacyl-[protein] = an N-terminal L-phenylalanyl-L-alpha-aminoacyl-[protein] + tRNA(Phe). Functionally, functions in the N-end rule pathway of protein degradation where it conjugates Leu, Phe and, less efficiently, Met from aminoacyl-tRNAs to the N-termini of proteins containing an N-terminal arginine or lysine. The protein is Leucyl/phenylalanyl-tRNA--protein transferase of Burkholderia orbicola (strain MC0-3).